The chain runs to 396 residues: Elongation factor Tu (396 aa).

Positions 10–206 (KPHVNIGTIG…AVDESVPDPV (197 aa)) constitute a tr-type G domain. Residues 19-26 (GHVDHGKT) form a G1 region. 19–26 (GHVDHGKT) is a GTP binding site. Position 26 (Thr26) interacts with Mg(2+). Residues 62 to 66 (GITIN) are G2. The G3 stretch occupies residues 83 to 86 (DAPG). GTP is bound by residues 83–87 (DAPGH) and 138–141 (NKSD). The tract at residues 138–141 (NKSD) is G4. The G5 stretch occupies residues 176-178 (SGL).

It belongs to the TRAFAC class translation factor GTPase superfamily. Classic translation factor GTPase family. EF-Tu/EF-1A subfamily. As to quaternary structure, monomer.

Its subcellular location is the cytoplasm. It catalyses the reaction GTP + H2O = GDP + phosphate + H(+). Functionally, GTP hydrolase that promotes the GTP-dependent binding of aminoacyl-tRNA to the A-site of ribosomes during protein biosynthesis. The chain is Elongation factor Tu from Pseudarthrobacter chlorophenolicus (strain ATCC 700700 / DSM 12829 / CIP 107037 / JCM 12360 / KCTC 9906 / NCIMB 13794 / A6) (Arthrobacter chlorophenolicus).